Here is a 510-residue protein sequence, read N- to C-terminus: UDP-N-acetylmuramoyl-tripeptide--D-alanyl-D-alanine ligase (510 aa).

Gly136–Ser142 contributes to the ATP binding site.

The protein belongs to the MurCDEF family. MurF subfamily.

It is found in the cytoplasm. The enzyme catalyses D-alanyl-D-alanine + UDP-N-acetyl-alpha-D-muramoyl-L-alanyl-gamma-D-glutamyl-meso-2,6-diaminopimelate + ATP = UDP-N-acetyl-alpha-D-muramoyl-L-alanyl-gamma-D-glutamyl-meso-2,6-diaminopimeloyl-D-alanyl-D-alanine + ADP + phosphate + H(+). The protein operates within cell wall biogenesis; peptidoglycan biosynthesis. In terms of biological role, involved in cell wall formation. Catalyzes the final step in the synthesis of UDP-N-acetylmuramoyl-pentapeptide, the precursor of murein. The protein is UDP-N-acetylmuramoyl-tripeptide--D-alanyl-D-alanine ligase of Mycobacterium tuberculosis (strain CDC 1551 / Oshkosh).